Consider the following 138-residue polypeptide: Gap junction alpha-4 protein (138 aa).

The Cytoplasmic portion of the chain corresponds to 1-16 (DWGFLEKLLDQVQEHS). A helical membrane pass occupies residues 17–39 (TVVGKIWLTVLFIFRILILGLAG). Residues 40 to 74 (ESVWGDEQSDFECNTAQPGCTNVCYDQAFPISHIP) are Extracellular-facing. The helical transmembrane segment at 75-97 (YWVLQFLFVSTPTLVYLGHVIYL) threads the bilayer. At 98–138 (SRREERLRQKEGELRALPDKDPRVERALAGIERQMAKISVA) the chain is on the cytoplasmic side.

The protein belongs to the connexin family. Alpha-type (group II) subfamily. In terms of assembly, a connexon is composed of a hexamer of connexins.

It is found in the cell membrane. The protein resides in the cell junction. It localises to the gap junction. Its function is as follows. One gap junction consists of a cluster of closely packed pairs of transmembrane channels, the connexons, through which materials of low MW diffuse from one cell to a neighboring cell. This Sus scrofa (Pig) protein is Gap junction alpha-4 protein (GJA4).